The chain runs to 105 residues: Nucleoid-associated protein RPC_4847 (105 aa).

It belongs to the YbaB/EbfC family. As to quaternary structure, homodimer.

The protein localises to the cytoplasm. It localises to the nucleoid. Functionally, binds to DNA and alters its conformation. May be involved in regulation of gene expression, nucleoid organization and DNA protection. The polypeptide is Nucleoid-associated protein RPC_4847 (Rhodopseudomonas palustris (strain BisB18)).